The sequence spans 509 residues: Methylthioalkylmalate synthase 1-1, chloroplastic (509 aa).

Residues 1 to 55 (MSFSPTYSIVMASPLLTSSQMIPTTGSTVGFRSILPFGSLRLTRPYKKTSLFISY) constitute a chloroplast transit peptide. Residues 91-365 (VRVYDTTLRD…YTRIDTRQIM (275 aa)) enclose the Pyruvate carboxyltransferase domain. Mn(2+) contacts are provided by Asp100, His298, and His300.

Belongs to the alpha-IPM synthase/homocitrate synthase family. In terms of assembly, monomer. Mn(2+) serves as cofactor. The cofactor is Co(2+).

It localises to the plastid. The protein resides in the chloroplast. The catalysed reaction is 4-methylsulfanyl-2-oxobutanoate + acetyl-CoA + H2O = 2-(2-methylsulfanyl)ethylmalate + CoA + H(+). Its pathway is secondary metabolite biosynthesis. Inhibited by EDTA, Cu(2+) and Zn(2+). Its function is as follows. Determines the side chain length of aliphatic glucosinolate structures. Involved in the biosynthesis of glucosinolate derivative natural products such as 6-(methylsulfinyl)hexylisothiocyanate (6-MSITC), a compound found in wasabi with diverse health-promoting properties. Catalyzes the conversion of 4-methylsulfanyl-2-oxobutanoate (4-MTOB) into 2-(2-methylsulfanyl)ethylmalate (2-(2-MT)EM). In Eutrema japonicum (Wasabi plant), this protein is Methylthioalkylmalate synthase 1-1, chloroplastic.